A 95-amino-acid polypeptide reads, in one-letter code: Acylphosphatase (95 aa).

One can recognise an Acylphosphatase-like domain in the interval 5-93; that stretch reads RAHLYIKGKV…GEFQDFRILP (89 aa). Active-site residues include Arg20 and Asn38.

Belongs to the acylphosphatase family.

The catalysed reaction is an acyl phosphate + H2O = a carboxylate + phosphate + H(+). This is Acylphosphatase (acyP) from Pyrobaculum islandicum (strain DSM 4184 / JCM 9189 / GEO3).